The primary structure comprises 440 residues: Glutamate--tRNA ligase 1 (440 aa).

The 'HIGH' region motif lies at Pro-7–Asn-17. The 'KMSKS' region motif lies at Lys-238–Arg-242. ATP is bound at residue Lys-241.

Belongs to the class-I aminoacyl-tRNA synthetase family. Glutamate--tRNA ligase type 1 subfamily. As to quaternary structure, monomer.

The protein resides in the cytoplasm. The catalysed reaction is tRNA(Glu) + L-glutamate + ATP = L-glutamyl-tRNA(Glu) + AMP + diphosphate. Catalyzes the attachment of glutamate to tRNA(Glu) in a two-step reaction: glutamate is first activated by ATP to form Glu-AMP and then transferred to the acceptor end of tRNA(Glu). This chain is Glutamate--tRNA ligase 1, found in Wolbachia sp. subsp. Brugia malayi (strain TRS).